Here is a 357-residue protein sequence, read N- to C-terminus: Arginine kinase (357 aa).

Residue alanine 2 is modified to N-acetylalanine. The Phosphagen kinase N-terminal domain occupies 9 to 91 (KLEEGFKKLE…FDPIIEDYHK (83 aa)). 64 to 68 (GVGVY) contributes to the L-arginine binding site. Positions 119-356 (FVISTRVRCG…LELIKIEKEM (238 aa)) constitute a Phosphagen kinase C-terminal domain. ATP is bound by residues 122 to 126 (STRVR) and histidine 185. Glutamate 225 is a binding site for L-arginine. Arginine 229 serves as a coordination point for ATP. L-arginine is bound at residue cysteine 271. Residues 280 to 284 (RASVH) and 309 to 314 (RGTRGE) each bind ATP. Residue glutamate 314 participates in L-arginine binding.

The protein belongs to the ATP:guanido phosphotransferase family.

The catalysed reaction is L-arginine + ATP = N(omega)-phospho-L-arginine + ADP + H(+). This Callinectes sapidus (Blue crab) protein is Arginine kinase.